A 497-amino-acid chain; its full sequence is MAFLLYYTLFISFMLWLAALLIISFSVYGSPEKVKLIKKTSLFFSFFQFILIIFFWILSDNISVLAEFDIYNFQFYKQWLFLYNFHYVIGMDNISLLFLLLTFFLTPICILISWNSIKYRYNSFIICLIFITFILFNIFCVLDLVFFYIFFESILIPMFILIGVWGSRQRKIHAVYQLFFYTLLGSLLMLLGILVIYSHIQTTDIRVLYNTNFSFYRQLILWASFFFAFCVKVPLFPFHIWLPEAHVEAPTVGSVILAGVLLKLGTYGLLRFVIPIFCDATYFFLPLVYTLCLLGIIYTCCSTIRQVDLKKVIAYASVSHMSFVILGLFTSNIQGIGGSVFLMLSHGIVSSGLFFCIGCVYDRYKTRILRYYSGLVSTMPIFSLCLFILILSNISFPGTSSFIGEFLILLGLFENNHFAALIATFSIILTAVYSIWLYNRIIFNRLVVNYYLRFSDFSKKEFVVGFIFCFITILFGLKGSYIISLIEAPLYVYLSFK.

The next 14 membrane-spanning stretches (helical) occupy residues 3–23, 42–62, 94–114, 122–142, 144–164, 178–198, 220–240, 250–270, 276–296, 313–333, 340–360, 374–394, 418–438, and 463–483; these read FLLY…LLII, LFFS…SDNI, ISLL…LISW, NSFI…FCVL, LVFF…LIGV, LFFY…VIYS, ILWA…PFHI, PTVG…YGLL, IFCD…LLGI, IAYA…TSNI, VFLM…IGCV, GLVS…LSNI, FAAL…IWLY, and VVGF…SYII.

It belongs to the complex I subunit 4 family.

The protein resides in the mitochondrion membrane. The enzyme catalyses a ubiquinone + NADH + 5 H(+)(in) = a ubiquinol + NAD(+) + 4 H(+)(out). Core subunit of the mitochondrial membrane respiratory chain NADH dehydrogenase (Complex I) that is believed to belong to the minimal assembly required for catalysis. Complex I functions in the transfer of electrons from NADH to the respiratory chain. The immediate electron acceptor for the enzyme is believed to be ubiquinone. This is NADH-ubiquinone oxidoreductase chain 4 (ND4) from Acanthamoeba castellanii (Amoeba).